A 233-amino-acid polypeptide reads, in one-letter code: 4'-phosphopantetheinyl transferase psf-1 (233 aa).

Asp110, Glu112, and Glu154 together coordinate Mg(2+). Residues 161-192 (GKGISYGLSSFTARLSEDGQATLRLPDHEAPC) are peptidyl carrier protein binding.

The protein belongs to the P-Pant transferase superfamily. Gsp/Sfp/HetI/AcpT family. Requires Mg(2+) as cofactor.

It catalyses the reaction apo-[peptidyl-carrier protein] + CoA = holo-[peptidyl-carrier protein] + adenosine 3',5'-bisphosphate + H(+). Its function is as follows. Probably activates the peptidyl carrier protein (PCP) domains of surfactin synthetase by transferring the 4'-phosphopantetheinyl moiety of coenzyme A (CoA) to a serine residue. Required for the production of the lipopeptide antibiotic, surfactin. The protein is 4'-phosphopantetheinyl transferase psf-1 (psf-1) of Bacillus pumilus (Bacillus mesentericus).